The primary structure comprises 1580 residues: Adhesion G protein-coupled receptor L3 (1580 aa).

The signal sequence occupies residues 1-19; it reads MWPSQLLVFMMLLAPIIHG. Over 20-949 the chain is Extracellular; the sequence is GKHSERHPAL…VHDLLLDVIT (930 aa). The tract at residues 23 to 81 is disordered; sequence SERHPALASPLRHAERGPGGALPPRHLLQQPAAERATAHRGPGPRGATRGVRGPGAHGA. The SUEL-type lectin domain maps to 103–192; that stretch reads SCESYPIELR…KYLEVQYECV (90 aa). 5 disulfides stabilise this stretch: Cys104/Cys134, Cys113/Cys191, Cys146/Cys178, Cys159/Cys165, and Cys203/Cys385. N-linked (GlcNAc...) asparagine glycosylation occurs at Asn161. In terms of domain architecture, Olfactomedin-like spans 202-461; that stretch reads LCPGLLKGVY…VVKYSLDFGP (260 aa). The interaction with FLRT3 stretch occupies residues 317-347; sequence YHDTSPYRWGGKSDIDLAVDENGLWVIYATE. The Ca(2+) site is built by Asp332, Asn380, Ala381, and Val435. Residues 494 to 540 form a disordered region; that stretch reads EISTTGPLGTGSTTTSTTLRTTTWSPGRSTTPSVSGRRNRSTSTPSP. Low complexity predominate over residues 496-521; sequence STTGPLGTGSTTTSTTLRTTTWSPGR. Over residues 522–539 the composition is skewed to polar residues; that stretch reads STTPSVSGRRNRSTSTPS. Asn532, Asn617, Asn827, Asn840, Asn885, and Asn911 each carry an N-linked (GlcNAc...) asparagine glycan. Residues 756 to 935 form the GAIN-B domain; that stretch reads DIVRENTDNI…AVLMAHVEVK (180 aa). 2 disulfide bridges follow: Cys886/Cys917 and Cys905/Cys919. Residues 886–935 are GPS; it reads CSFWSYSKRTMTGYWSTQGCRLLTTNKTHTTCSCNHLTNFAVLMAHVEVK. The stachel stretch occupies residues 923-939; that stretch reads TNFAVLMAHVEVKHSDA. The chain crosses the membrane as a helical span at residues 950-970; sequence WVGILLSLVCLLICIFTFCFF. Over 971 to 978 the chain is Cytoplasmic; the sequence is RGLQSDRN. The helical transmembrane segment at 979 to 999 threads the bilayer; sequence TIHKNLCISLFVAELLFLIGI. An N-linked (GlcNAc...) asparagine glycan is attached at Asn1000. Residues 1000 to 1007 are Extracellular-facing; it reads NRTDQPIA. Residues 1008–1028 form a helical membrane-spanning segment; the sequence is CAVFAALLHFFFLAAFTWMFL. The Cytoplasmic portion of the chain corresponds to 1029–1050; that stretch reads EGVQLYIMLVEVFESEHSRRKY. The helical transmembrane segment at 1051 to 1071 threads the bilayer; that stretch reads FYLVGYGMPALIVAVSAAVDY. Topologically, residues 1072 to 1088 are extracellular; the sequence is RSYGTDKVCWLRLDTYF. The helical transmembrane segment at 1089–1109 threads the bilayer; the sequence is IWSFIGPATLIIMLNVIFLGI. The Cytoplasmic portion of the chain corresponds to 1110–1142; that stretch reads ALYKMFHHTAILKPESGCLDNINYEDNRPFIKS. Residues 1143 to 1163 form a helical membrane-spanning segment; that stretch reads WVIGAIALLCLLGLTWAFGLM. Residues 1164 to 1169 are Extracellular-facing; sequence YINEST. Asn1166 is a glycosylation site (N-linked (GlcNAc...) asparagine). The chain crosses the membrane as a helical span at residues 1170–1190; that stretch reads VIMAYLFTIFNSLQGMFIFIF. At 1191-1580 the chain is on the cytoplasmic side; the sequence is HCVLQKKVRK…KGPAHLVTSL (390 aa). Residues 1213–1238 are disordered; the sequence is GRSTESSIGSGKTSGSRTPGRYSTGS. Position 1254 is a phosphoserine (Ser1254). Residues 1555 to 1580 are disordered; sequence FIVPPNKDGTPPEGSSKGPAHLVTSL. Positions 1575–1580 match the PDZ-binding motif; it reads HLVTSL.

It belongs to the G-protein coupled receptor 2 family. LN-TM7 subfamily. As to quaternary structure, heterodimer of 2 chains generated by proteolytic processing; the large extracellular N-terminal fragment and the membrane-bound C-terminal fragment predominantly remain associated and non-covalently linked. Interacts (via olfactomedin-like domain) with FLRT1 (via extracellular domain). Interacts (via olfactomedin-like domain) with FLRT2 (via extracellular domain). Interacts (via olfactomedin-like domain) with FLRT3 (via extracellular domain); the interaction is direct. Interacts (via extracellular domain) with TENM1. Interacts (via extracellular domain) with TENM2. Interacts (via extracellular domain) with TENM3. Identified in a complex with FLRT3 and UNC5B; does not interact with UNC5B by itself. Identified in a complex with FLRT3 and UNC5D; does not interact with UNC5D by itself. In terms of assembly, interacts (via PDZ-binding motif) with SHANK3. Interacts (via PDZ-binding motif) with DLG4. Autoproteolytically processed at the GPS region of the GAIN-B domain; this cleavage modulates receptor activity. As to expression, brain-specific distribution but low levels are also detected in lung and spleen.

The protein localises to the cell membrane. The protein resides in the postsynaptic cell membrane. Its subcellular location is the cell projection. It is found in the axon. It localises to the cell junction. Forms a heterodimer of 2 chains generated by proteolytic processing that remain associated through non-covalent interactions mediated by the GAIN-B domain. In the inactivated receptor, the Stachel sequence (also named stalk) is embedded in the GAIN-B domain, where it adopts a beta-strand conformation. On activation, the Stachel moves into the 7 transmembrane region and adopts a twisted hook-shaped configuration that forms contacts within the receptor, leading to coupling of a G-alpha protein, which activates signaling. The cleaved GAIN-B and N-terminal domains can then dissociate from the rest of the receptor. Functionally, orphan adhesion G-protein coupled receptor (aGPCR), which mediates synapse specificity. Ligand binding causes a conformation change that triggers signaling via guanine nucleotide-binding proteins (G proteins) and modulates the activity of downstream effectors. ADGRL3 is coupled with different classes of G alpha proteins, such as G(12)/G(13), G(s), G(i) or G(q), depending on the context. Coupling to G(12)/G(13) G proteins, which mediates the activation Rho small GTPases is the most efficient. Following G-protein coupled receptor activation, associates with cell adhesion molecules that are expressed at the surface of adjacent cells to direct synapse specificity. Specifically mediates the establishment of Schaffer-collateral synapses formed by CA3-region axons on CA1-region pyramidal neurons in the hippocampus. Localizes to postsynaptic spines in excitatory synapses in the S.oriens and S.radiatum and interacts with presynaptic cell adhesion molecules FLRT3 and TENM2, promoting synapse formation. Plays a role in the development of glutamatergic synapses in the cortex. Important in determining the connectivity rates between the principal neurons in the cortex. Its function is as follows. Orphan adhesion G-protein coupled receptor (aGPCR), which mediates synapse specificity. Ligand binding causes a conformation change that triggers signaling via guanine nucleotide-binding proteins (G proteins) and modulates the activity of downstream effectors, such as adenylate cyclase. Isoform 1 is specifically coupled to G(s) G proteins and mediates activation of adenylate cyclase activity. Following G-protein coupled receptor activation, undergoes liquid-liquid phase transition, associates with (1) cell adhesion molecules that are expressed at the surface of adjacent cells, as well as (2) PDZ-containing proteins, such as SHANK3 and DLG4, in the cytoplasm to direct synapse formation. This is Adhesion G protein-coupled receptor L3 from Bos taurus (Bovine).